Consider the following 496-residue polypeptide: Mothers against decapentaplegic homolog 6 (496 aa).

The span at 1-15 (MFRSKRSGLVRRLWR) shows a compositional bias: basic residues. 2 disordered regions span residues 1–116 (MFRS…PGWL) and 136–156 (GAPR…AGGG). Dimethylated arginine; alternate is present on residues Arg75 and Arg82. An omega-N-methylarginine; alternate mark is found at Arg75 and Arg82. The region spanning 148-275 (AALEPAGGGR…FSRLCGPESP (128 aa)) is the MH1 domain. Lys173 participates in a covalent cross-link: Glycyl lysine isopeptide (Lys-Gly) (interchain with G-Cter in ubiquitin). Zn(2+) is bound by residues Cys205, Cys247, Cys260, and His265. The 166-residue stretch at 331 to 496 (WCSVAYWEHR…WLEILLNNPR (166 aa)) folds into the MH2 domain. Ser435 is modified (phosphoserine; by PRKX; in vitro).

This sequence belongs to the dwarfin/SMAD family. In terms of assembly, interacts with NEDD4L. Interacts with WWP1. Interacts with STAMBP and PRKX. Interacts with RNF111 and AXIN1. Interacts with TGF-beta type I receptor superfamily members, including ACVR1B, BMPR1B and TGFBR1. In response to BMP2, but not to TGFB treatment, interacts with SMAD1, but not with SMAD2, nor with SMAD4; this interaction may inhibit SMAD1 binding to SMAD4. Interacts with HOXC8 and HOXC9. Interacts with PELI1; this interaction interferes with PELI1 complex formation with TRAF6, IRAK1, IRAK4 and MYD88 in response to IL1B and hence negatively regulates IL1R-TLR signaling. Interacts with TSC22D1/TSC-22. Post-translationally, phosphorylated by BMP type 1 receptor kinase and by PRKX. In terms of processing, monoubiquitinated at Lys-173 by the E2/E3 hybrid ubiquitin-protein ligase UBE2O, leading to reduced binding affinity for the activated BMP type I receptor ACVR1/ALK2, thereby enhancing BMP7 and regulating adipocyte differentiation. Ubiquitinated by WWP1. Ubiquitinated by ARK2C, promoting proteasomal degradation, leading to enhance the BMP-Smad signaling. Arginine methylation by PRMT1, which is recruited by BMPR2, initiates BMP-Induced signaling and induces dissociation from the BMPR1B receptor at the cell surface leading to derepress downstream Smad1/Smad5 signaling. Expressed in the brain, heart, ovary, peripheral blood leukocytes, small intestine, spleen, thymus, bone marrow, fetal liver and lymph nodes.

It localises to the nucleus. Its function is as follows. Transforming growth factor-beta superfamily receptors signaling occurs through the Smad family of intracellular mediators. SMAD6 is an inhibitory Smad (i-Smad) that negatively regulates signaling downstream of type I transforming growth factor-beta. Acts as a mediator of TGF-beta and BMP anti-inflammatory activities. Suppresses IL1R-TLR signaling through its direct interaction with PEL1, preventing NF-kappa-B activation, nuclear transport and NF-kappa-B-mediated expression of pro-inflammatory genes. Blocks the BMP-SMAD1 signaling pathway by competing with SMAD4 for receptor-activated SMAD1-binding. Binds to regulatory elements in target promoter regions. The polypeptide is Mothers against decapentaplegic homolog 6 (SMAD6) (Homo sapiens (Human)).